The primary structure comprises 263 residues: Indolethylamine N-methyltransferase (263 aa).

Lysine 13 is modified (N6-succinyllysine). Residues tyrosine 20, tyrosine 25, 63–64, tyrosine 69, aspartate 85, and asparagine 90 contribute to the S-adenosyl-L-methionine site; that span reads GS. Lysine 96 is subject to N6-succinyllysine. S-adenosyl-L-methionine-binding positions include 142–143 and leucine 163; that span reads DV.

The protein belongs to the class I-like SAM-binding methyltransferase superfamily. NNMT/PNMT/TEMT family. Monomer.

The protein localises to the cytoplasm. The catalysed reaction is a tertiary amine + S-adenosyl-L-methionine = a methylated tertiary amine + S-adenosyl-L-homocysteine + H(+). The enzyme catalyses a secondary amine + S-adenosyl-L-methionine = a methylated secondary amine + S-adenosyl-L-homocysteine + H(+). It carries out the reaction a primary amine + S-adenosyl-L-methionine = a methylated primary amine + S-adenosyl-L-homocysteine + H(+). It catalyses the reaction dimethyl sulfide + S-adenosyl-L-methionine = trimethylsulfonium + S-adenosyl-L-homocysteine. Catalyzes the N-methylation of tryptamine and structurally related compounds. Functions as a thioether S-methyltransferase and is active with a variety of thioethers and the corresponding selenium and tellurium compounds, including 3-methylthiopropionaldehyde, dimethyl selenide, dimethyl telluride, 2-methylthioethylamine, 2-methylthioethanol, methyl-n-propyl sulfide and diethyl sulfide. Plays an important role in the detoxification of selenium compounds. This Pongo abelii (Sumatran orangutan) protein is Indolethylamine N-methyltransferase (INMT).